The following is a 127-amino-acid chain: S1-like domain-containing protein C146.08c (127 aa).

The region spanning 10-86 is the S1-like domain; the sequence is SFDPPARLEK…NKIDGTILYV (77 aa). Positions 107–127 are disordered; it reads ESLNQNDSEESSSSEEEYDSD. Residues 113–127 show a composition bias toward acidic residues; sequence DSEESSSSEEEYDSD. Position 124 is a phosphotyrosine (Tyr-124). Residue Ser-126 is modified to Phosphoserine.

Belongs to the EIF1AD family.

It is found in the cytoplasm. It localises to the nucleus. The chain is S1-like domain-containing protein C146.08c from Schizosaccharomyces pombe (strain 972 / ATCC 24843) (Fission yeast).